The sequence spans 221 residues: Enolase-phosphatase E1 (221 aa).

Belongs to the HAD-like hydrolase superfamily. MasA/MtnC family. Monomer. Mg(2+) is required as a cofactor.

The enzyme catalyses 5-methylsulfanyl-2,3-dioxopentyl phosphate + H2O = 1,2-dihydroxy-5-(methylsulfanyl)pent-1-en-3-one + phosphate. It participates in amino-acid biosynthesis; L-methionine biosynthesis via salvage pathway; L-methionine from S-methyl-5-thio-alpha-D-ribose 1-phosphate: step 3/6. It functions in the pathway amino-acid biosynthesis; L-methionine biosynthesis via salvage pathway; L-methionine from S-methyl-5-thio-alpha-D-ribose 1-phosphate: step 4/6. In terms of biological role, bifunctional enzyme that catalyzes the enolization of 2,3-diketo-5-methylthiopentyl-1-phosphate (DK-MTP-1-P) into the intermediate 2-hydroxy-3-keto-5-methylthiopentenyl-1-phosphate (HK-MTPenyl-1-P), which is then dephosphorylated to form the acireductone 1,2-dihydroxy-3-keto-5-methylthiopentene (DHK-MTPene). The chain is Enolase-phosphatase E1 from Hydrogenobaculum sp. (strain Y04AAS1).